The following is a 353-amino-acid chain: Histidinol-phosphate aminotransferase (353 aa).

Lys214 is modified (N6-(pyridoxal phosphate)lysine).

This sequence belongs to the class-II pyridoxal-phosphate-dependent aminotransferase family. Histidinol-phosphate aminotransferase subfamily. In terms of assembly, homodimer. Pyridoxal 5'-phosphate is required as a cofactor.

It catalyses the reaction L-histidinol phosphate + 2-oxoglutarate = 3-(imidazol-4-yl)-2-oxopropyl phosphate + L-glutamate. It participates in amino-acid biosynthesis; L-histidine biosynthesis; L-histidine from 5-phospho-alpha-D-ribose 1-diphosphate: step 7/9. In Gloeobacter violaceus (strain ATCC 29082 / PCC 7421), this protein is Histidinol-phosphate aminotransferase.